The sequence spans 24 residues: General odorant-binding protein (24 aa).

Belongs to the PBP/GOBP family. In terms of assembly, homodimer. As to expression, antenna.

Its function is as follows. Present in the aqueous fluid surrounding olfactory sensory dendrites and are thought to aid in the capture and transport of hydrophobic odorants into and through this fluid. This is General odorant-binding protein from Antheraea polyphemus (Polyphemus moth).